The following is a 153-amino-acid chain: Cytochrome c-type biogenesis protein CcmE (153 aa).

The Cytoplasmic portion of the chain corresponds to 1–8 (MTPVQRRR). The chain crosses the membrane as a helical; Signal-anchor for type II membrane protein span at residues 9–29 (LVWVLLALLASGLATALVAMA). At 30–153 (LERNIAYLYT…DVPVTAPEVR (124 aa)) the chain is on the periplasmic side. The heme site is built by His-123 and Tyr-127.

The protein belongs to the CcmE/CycJ family.

It localises to the cell inner membrane. Functionally, heme chaperone required for the biogenesis of c-type cytochromes. Transiently binds heme delivered by CcmC and transfers the heme to apo-cytochromes in a process facilitated by CcmF and CcmH. In Stenotrophomonas maltophilia (strain R551-3), this protein is Cytochrome c-type biogenesis protein CcmE.